The following is a 267-amino-acid chain: L-aspartate dehydrogenase 2 (267 aa).

Residues Ala123 and Asn189 each contribute to the NAD(+) site. His219 is a catalytic residue.

Belongs to the L-aspartate dehydrogenase family.

It carries out the reaction L-aspartate + NADP(+) + H2O = oxaloacetate + NH4(+) + NADPH + H(+). The catalysed reaction is L-aspartate + NAD(+) + H2O = oxaloacetate + NH4(+) + NADH + H(+). It functions in the pathway cofactor biosynthesis; NAD(+) biosynthesis; iminoaspartate from L-aspartate (dehydrogenase route): step 1/1. Functionally, specifically catalyzes the NAD or NADP-dependent dehydrogenation of L-aspartate to iminoaspartate. The sequence is that of L-aspartate dehydrogenase 2 from Bordetella bronchiseptica (strain ATCC BAA-588 / NCTC 13252 / RB50) (Alcaligenes bronchisepticus).